The chain runs to 477 residues: MFRRCAVKLNPYDVVVIGGGPGGYVASIKAAQLGMKTACVEKRGALGGTCLNVGCIPSKALLHATHVYHDAHANFARYGLMGGEGVTMDSAKMQQQKERAVKGLTGGVEYLFKKNKVTYYKGEGSFETAHSIRVNGLDGKQEMFETKKTIIATGSEPTELPFLPFDEKVVLSSTGALALPRVPKTMVVIGGGVIGLELGSVWARLGAKVTVVEFAPRCAPTLDEDVTNALVGALAKNEKMKFMTSTKVVGGTNNGDSVSLEVEGKNGKRETVTCEALLVSVGRRPFTGGLGLDKINVAKNERGFVKIGDHFETSIPDVYAIGDVVDKGPMLAHKAEDEGVACAEILAGKPGHVNYGVIPAVIYTMPEVASVGKSEEELKKEGVAYKVGKFPFNANSRAKAVSTEDGFVKVLVDKATDRILGVHIVCTTAGELIGEACLAMEYGASSEDVGRTCHAHPTMSEALKEACMALVAKTINF.

FAD contacts are provided by residues 41 to 50 (EKRGALGGTC), K59, G124, and 153 to 155 (TGS). C50 and C55 form a disulfide bridge. NAD(+) is bound by residues 190–197 (GGGVIGLE), E213, V248, and G282. FAD-binding positions include D323 and 330-333 (MLAH). H456 (proton acceptor) is an active-site residue.

Belongs to the class-I pyridine nucleotide-disulfide oxidoreductase family. As to quaternary structure, homodimer. It depends on FAD as a cofactor.

It catalyses the reaction N(6)-[(R)-dihydrolipoyl]-L-lysyl-[protein] + NAD(+) = N(6)-[(R)-lipoyl]-L-lysyl-[protein] + NADH + H(+). This Trypanosoma cruzi protein is Dihydrolipoyl dehydrogenase (LPD).